Consider the following 115-residue polypeptide: MHEASLAGGILKLVEDAARREAFQRVTVLRLEVGQLAGVELRALKFALEAIAPGTALDGARLEFEEPAGQAWCMACSQTVPLAARGMACTGCGSYQLQPTGGTELRVMDMLVADE.

H2 is a Ni(2+) binding site. Zn(2+)-binding residues include C73, C76, C89, and C92.

This sequence belongs to the HypA/HybF family.

Involved in the maturation of [NiFe] hydrogenases. Required for nickel insertion into the metal center of the hydrogenase. This chain is Hydrogenase maturation factor HypA, found in Polaromonas naphthalenivorans (strain CJ2).